The primary structure comprises 85 residues: uncharacterized protein (85 aa).

The stretch at 17–53 forms a coiled coil; that stretch reads KKRYEMLVQELLKEDDEEREKILAEELELLLDFLKKA.

This is an uncharacterized protein from Archaeoglobus fulgidus (strain ATCC 49558 / DSM 4304 / JCM 9628 / NBRC 100126 / VC-16).